The following is a 174-amino-acid chain: Adipose-secreted signaling protein (174 aa).

Alanine 2 bears the N-acetylalanine mark. A Phosphothreonine modification is found at threonine 147.

Belongs to the ADISSP family.

Its subcellular location is the secreted. Functionally, adipocyte-secreted protein (adipokine) that acts as a key regulator for white adipose tissue (WAT) thermogenesis and glucose homeostasis at least in part through activation of protein kinase A (PKA). In Rattus norvegicus (Rat), this protein is Adipose-secreted signaling protein.